Reading from the N-terminus, the 485-residue chain is GlcNAc-binding protein A (485 aa).

Residues 1–29 (MKKQPQKTLLAIALSVVSGTAMSHGYVSA) form the signal peptide. A Chitin-binding type-4 domain is found at 30 to 200 (VENGVAEARV…SFYNVIDVKF (171 aa)). One can recognise a Chitin-binding type-3 domain in the interval 437–478 (ADTKVLASDGAIYQCKPFPYSGYCVQWTPTATQYQPGTGSHW).

It belongs to the GbpA family.

It localises to the secreted. Its function is as follows. Probably interacts with GlcNAc residues. May promote attachment to both epithelial cell surfaces and chitin. This Vibrio vulnificus (strain CMCP6) protein is GlcNAc-binding protein A.